The following is a 61-amino-acid chain: Metallothionein-1A (61 aa).

The residue at position 1 (M1) is an N-acetylmethionine. The tract at residues 1–29 (MDPNCSCATGGSCTCTGSCKCKECKCTSC) is beta. The a divalent metal cation site is built by C5, C7, C13, C15, C19, C21, C24, C26, C29, C33, C34, C36, C37, C41, C44, C48, C50, and C57. An alpha region spans residues 30 to 61 (KKSCCSCCPMSCAKCAQGCICKGASEKCSCCA). S58 is modified (phosphoserine). 2 residues coordinate a divalent metal cation: C59 and C60.

Belongs to the metallothionein superfamily. Type 1 family. Monomer.

In terms of biological role, metallothioneins have a high content of cysteine residues that bind various heavy metals; these proteins are transcriptionally regulated by both heavy metals and glucocorticoids. In Homo sapiens (Human), this protein is Metallothionein-1A (MT1A).